A 132-amino-acid chain; its full sequence is Fatty acid-binding protein type 3 (132 aa).

Belongs to the calycin superfamily. Fatty-acid binding protein (FABP) family.

The protein is Fatty acid-binding protein type 3 of Fasciola hepatica (Liver fluke).